The sequence spans 495 residues: ATP synthase subunit beta, chloroplastic (495 aa).

172–179 (GGAGVGKT) provides a ligand contact to ATP.

It belongs to the ATPase alpha/beta chains family. As to quaternary structure, F-type ATPases have 2 components, CF(1) - the catalytic core - and CF(0) - the membrane proton channel. CF(1) has five subunits: alpha(3), beta(3), gamma(1), delta(1), epsilon(1). CF(0) has four main subunits: a(1), b(1), b'(1) and c(9-12).

Its subcellular location is the plastid. It is found in the chloroplast thylakoid membrane. The catalysed reaction is ATP + H2O + 4 H(+)(in) = ADP + phosphate + 5 H(+)(out). Functionally, produces ATP from ADP in the presence of a proton gradient across the membrane. The catalytic sites are hosted primarily by the beta subunits. The sequence is that of ATP synthase subunit beta, chloroplastic from Beaucarnea recurvata (Elephant-foot tree).